A 1021-amino-acid polypeptide reads, in one-letter code: Phytosulfokine receptor 1 (1021 aa).

Residues methionine 1 to serine 24 form the signal peptide. An LRR 1 repeat occupies valine 21–glycine 43. Asparagine 26, asparagine 54, and asparagine 83 each carry an N-linked (GlcNAc...) asparagine glycan. LRR repeat units lie at residues serine 85–leucine 109, aspartate 110–leucine 133, asparagine 135–leucine 156, serine 158–asparagine 180, leucine 181–cysteine 205, serine 206–leucine 229, asparagine 231–lysine 252, leucine 253–leucine 277, serine 301–methionine 325, threonine 326–cysteine 349, arginine 351–asparagine 372, phenylalanine 373–glutamine 397, leucine 402–asparagine 426, lysine 428–serine 448, proline 449–serine 474, and phenylalanine 476–leucine 496. Asparagine 116 and asparagine 132 each carry an N-linked (GlcNAc...) asparagine glycan. 3 N-linked (GlcNAc...) asparagine glycosylation sites follow: asparagine 204, asparagine 217, and asparagine 231. N-linked (GlcNAc...) asparagine glycans are attached at residues asparagine 311, asparagine 321, and asparagine 327. 2 N-linked (GlcNAc...) asparagine glycosylation sites follow: asparagine 383 and asparagine 388. N-linked (GlcNAc...) asparagine glycosylation is found at asparagine 482, asparagine 546, asparagine 568, asparagine 576, and asparagine 592. An LRR 18; atypical repeat occupies serine 498–aspartate 555. 3 LRR repeats span residues leucine 556–methionine 580, threonine 581–leucine 604, and phenylalanine 606–threonine 629. An N-linked (GlcNAc...) asparagine glycan is attached at asparagine 632. Residues valine 673–leucine 693 traverse the membrane as a helical segment. In terms of domain architecture, Protein kinase spans phenylalanine 743–leucine 1014. Residues isoleucine 749–valine 757 and lysine 771 each bind ATP. Aspartate 869 (proton acceptor) is an active-site residue.

The protein belongs to the protein kinase superfamily. Ser/Thr protein kinase family. In terms of processing, N-glycosylated. As to expression, expressed ubiquitously in leaf, apical meristem, hypocotyl and root.

The protein localises to the cell membrane. The enzyme catalyses L-seryl-[protein] + ATP = O-phospho-L-seryl-[protein] + ADP + H(+). It carries out the reaction L-threonyl-[protein] + ATP = O-phospho-L-threonyl-[protein] + ADP + H(+). Phytosulfokine receptor with a serine/threonine-protein kinase activity. Regulates, in response to phytosulfokine binding, a signaling cascade involved in plant cell differentiation, organogenesis and somatic embryogenesis. The sequence is that of Phytosulfokine receptor 1 (PSKR) from Daucus carota (Wild carrot).